A 500-amino-acid chain; its full sequence is Glycerol-3-phosphate acyltransferase 7 (500 aa).

Transmembrane regions (helical) follow at residues 38-58 and 235-255; these read GLIR…LDVL and ALII…RIFV. An HXXXXD motif motif is present at residues 298 to 303; that stretch reads HRTLMD.

The protein belongs to the GPAT/DAPAT family. Weakly or not expressed in roots, leaves, seedlings, developing siliques and flower buds.

Its subcellular location is the membrane. It carries out the reaction sn-glycerol 3-phosphate + an acyl-CoA = a 1-acyl-sn-glycero-3-phosphate + CoA. The protein operates within phospholipid metabolism; CDP-diacylglycerol biosynthesis; CDP-diacylglycerol from sn-glycerol 3-phosphate: step 1/3. In terms of biological role, esterifies acyl-group from acyl-ACP to the sn-1 position of glycerol-3-phosphate, an essential step in glycerolipid biosynthesis. The protein is Glycerol-3-phosphate acyltransferase 7 (GPAT7) of Arabidopsis thaliana (Mouse-ear cress).